A 462-amino-acid polypeptide reads, in one-letter code: Iroquois-class homeodomain protein irx-1-B (462 aa).

The segment at residues Asp121–Asn183 is a DNA-binding region (homeobox; TALE-type). Disordered stretches follow at residues Gly191–Lys302, Ser314–Ala339, and Ser405–Ala462. 2 stretches are compositionally biased toward acidic residues: residues Glu210–Ile220 and Asn228–Glu239. Residues Lys240–Glu257 are compositionally biased toward basic and acidic residues. Basic and acidic residues predominate over residues Arg410 to Pro426. The span at Phe446–Ile455 shows a compositional bias: polar residues.

The protein belongs to the TALE/IRO homeobox family.

The protein localises to the nucleus. In terms of biological role, acts partially redundantly with other irx members in neural patterning. Required for formation of the posterior forebrain, midbrain, hindbrain, and to a lesser extent, spinal cord. Acts early in neural plate development to induce expression of some but not all proneural genes, and specify a neural precursor state. Also up-regulates repressors that prevent neuronal differentiation. Patterns the neuroectoderm in both the anterior/posterior and dorsal/ventral axes. Acts primarily as a transcriptional repressor during neural development, and binds to the bmp4 promoter to repress gene expression and thus mediate down-regulation of bmp4 by wnt signaling. Controls multiple processes through bmp4-repression including neural plate development, neural crest specification and Spemann organizer development. Involved in the specification of the preplacodal field at the anterior border of the neural plate. Regulates the genetic cascade of interactions that are necessary for positioning the isthmus organizer and the formation of the midbrain-hindbrain boundary. Required during at least two stages of pronephros kidney development; during neurula stages, maintains transcription of key renal genes to define the size and identity of the pronephric anlage, probably in part through regulation of bmp-signaling. Subsequently required for proper formation of the intermediate tubule segment of the pronephros. Acts principally as a transcriptional activator during pronephros development. The sequence is that of Iroquois-class homeodomain protein irx-1-B (irx1-b) from Xenopus laevis (African clawed frog).